The sequence spans 692 residues: MAREFSLENTRNIGIMAHIDAGKTTATERILYYTGRIHKIGETHEGASQMDWMEQEQERGITITSAATTAQWKGHRVNIIDTPGHVDFTVEVERSLRVLDGAVAVLDAQSGVEPQTETVWRQATTYGVPRIVFVNKMDKIGADFLYSVGTIHDRLQANAHPIQLPIGAEDEFNGIIDLVEECAYMYGNDLGTDIQRVEIPEEHKELAEEYRGKLIEAVAELDEEMMMKYLEGEEITVEELKAGIRKATTSVEFFPVICGSAFKNKGVQILLDAVIDYLPSPLDVPAIKGIVPDTDEEVERKSSDEEPFAALAFKIMTDPYVGKLTFFRVYSGVLNSGSYVKNSTKGKRERVGRILQMHANSREEISTVYAGDIAAAVGLKDTTTGDTLCDEKSLVILESMEFPEPVISVAIEPKSKADQDKMGTALSKLSEEDPTFRAHTDQETGQTIIAGMGELHLDIIVDRMRREFKVEANVGAPQVAYRETFRAAAKVEGKFARQSGGRGQFGHVWIEFEPNEEGKGFEFENKIVGGVVPREYIPAVGAGLEDALKNGVLAGYPVADIKAALVDGSYHDVDSSEMAFKIAASMALKAAVSKCNPVILEPMMKVEVVIPEEYMGDIMGDVTSRRGRVEGMEARGNAQVVRAMVPLSEMFGYATSLRSNTQGRGTFSMVFDHYEEVPKSVSEEIIKKNKGE.

One can recognise a tr-type G domain in the interval 8-282 (ENTRNIGIMA…AVIDYLPSPL (275 aa)). GTP contacts are provided by residues 17 to 24 (AHIDAGKT), 81 to 85 (DTPGH), and 135 to 138 (NKMD).

The protein belongs to the TRAFAC class translation factor GTPase superfamily. Classic translation factor GTPase family. EF-G/EF-2 subfamily.

Its subcellular location is the cytoplasm. Functionally, catalyzes the GTP-dependent ribosomal translocation step during translation elongation. During this step, the ribosome changes from the pre-translocational (PRE) to the post-translocational (POST) state as the newly formed A-site-bound peptidyl-tRNA and P-site-bound deacylated tRNA move to the P and E sites, respectively. Catalyzes the coordinated movement of the two tRNA molecules, the mRNA and conformational changes in the ribosome. In Bacillus anthracis (strain CDC 684 / NRRL 3495), this protein is Elongation factor G.